We begin with the raw amino-acid sequence, 191 residues long: Large ribosomal subunit protein uL5 (191 aa).

This sequence belongs to the universal ribosomal protein uL5 family. As to quaternary structure, part of the 50S ribosomal subunit; part of the 5S rRNA/L5/L18/L25 subcomplex. Contacts the 5S rRNA and the P site tRNA. Forms a bridge to the 30S subunit in the 70S ribosome.

Functionally, this is one of the proteins that bind and probably mediate the attachment of the 5S RNA into the large ribosomal subunit, where it forms part of the central protuberance. In the 70S ribosome it contacts protein S13 of the 30S subunit (bridge B1b), connecting the 2 subunits; this bridge is implicated in subunit movement. Contacts the P site tRNA; the 5S rRNA and some of its associated proteins might help stabilize positioning of ribosome-bound tRNAs. This Corynebacterium glutamicum (strain R) protein is Large ribosomal subunit protein uL5.